The following is a 2211-amino-acid chain: Norsolorinic acid synthase stcA (2211 aa).

Positions 11-251 (FLFGDQTYDF…REIPIYVPAH (241 aa)) are starter unit:ACP transacylase (SAT) domain. The interval 358-378 (PAEPPTSINKTPERYSHRPGS) is disordered. Positions 368–378 (TPERYSHRPGS) are enriched in basic and acidic residues. The Ketosynthase family 3 (KS3) domain occupies 380–812 (RGKLAIVSMS…GGNTAVLVED (433 aa)). Catalysis depends on for beta-ketoacyl synthase activity residues C552, H687, and H730. Residues 912-1201 (IACSGQGSQY…MAGMIKTTLD (290 aa)) form a malonyl-CoA:ACP transacylase (MAT) domain region. The active-site For acyl/malonyl transferase activity is the S1004. Positions 1289-1316 (TATSDYQLPSDEQVAAKRPSKQDESKEA) are disordered. The interval 1327-1468 (HRVVEEKTEP…CTVRFTSEAQ (142 aa)) is N-terminal hotdog fold. Positions 1327-1643 (HRVVEEKTEP…LRRVPRRGLR (317 aa)) constitute a PKS/mFAS DH domain. A product template (PT) domain region spans residues 1340-1643 (TLVVETDISR…LRRVPRRGLR (304 aa)). H1359 serves as the catalytic Proton acceptor; for dehydratase activity. Residues 1495-1643 (FIRYTTKSGY…LRRVPRRGLR (149 aa)) are C-terminal hotdog fold. D1555 serves as the catalytic Proton donor; for dehydratase activity. The segment at 1655–1706 (RLHGNQQAVKTQAPQRAALKQKPQSSPTQPHASKVAYSRSATSPTAGKPVVA) is disordered. 2 stretches are compositionally biased toward polar residues: residues 1658 to 1668 (GNQQAVKTQAP) and 1676 to 1685 (KPQSSPTQPH). 2 Carrier domains span residues 1712-1791 (REGD…SGSA) and 1839-1915 (DELF…GTTS). O-(pantetheine 4'-phosphoryl)serine is present on residues S1749 and S1873. Positions 1912-1926 (GTTSGSTTGSSGSGS) are enriched in low complexity. Residues 1912-1947 (GTTSGSTTGSSGSGSSEDETDSIPSTPEEYTTADTR) are disordered. Residues 1934 to 1945 (IPSTPEEYTTAD) show a composition bias toward polar residues. A thioesterase/Claisen cyclase (TE/CLC) domain region spans residues 1969–2205 (ILFMLPDGGG…KEHVYLVREL (237 aa)). S2039 acts as the For thioesterase activity in catalysis.

Pantetheine 4'-phosphate serves as cofactor.

It carries out the reaction hexanoyl-[ACP] + 7 malonyl-CoA + 6 H(+) = noranthrone + holo-[ACP] + 7 CO2 + 7 CoA + 2 H2O. It functions in the pathway mycotoxin biosynthesis; sterigmatocystin biosynthesis. Functionally, non-reducing polyketide synthase; part of the gene cluster that mediates the biosynthesis of sterigmatocystin (ST), a polyketide-derived furanocoumarin which is part of the most toxic and carcinogenic compounds among the known mycotoxins. The first step in the biosynthesis of sterigmatocystin is the production of hexanoate by the fatty acid synthase (FAS) units stcJ and stcK. The polyketide backbone is assembled by the non-reducing polyketide synthase stcA by condensation of the starter hexanoyl-CoA and 7 malonyl-CoA extender units followed by cyclization and release of norsolorinic acid. Norsolorinic acid is the first stable intermediate in the biosynthesis of sterigmatocystin and is converted into averantin (AVN) by the ketoreductase stcE which reduces the hexanoate ketone to an alcohol. Averantin is then oxidized into 5'-hydroxyaverantin (HAVN) by the cytochrome P450 monooxygenase stcF. 5'-hydroxyaverantin is further converted to 5'-oxyaverantin (OAVN) by the 5'-hydroxyaverantin dehydrogenase stcG. The next step is the conversion of OAVN into averufin (AVF) which is catalyzed by a yet to be identified enzyme. The cytochrome P450 monooxygenase stcB and the flavin-binding monooxygenase stcW are both required for the conversion of averufin to 1-hydroxyversicolorone. The esterase stcI probably catalyzes the formation of versiconal hemiacetal acetate from 1-hydroxyversicolorone. The oxydoreductase stcN then probably catalyzes the biosynthetic step from versiconal to versicolorin B (VERB). The next step is performed by the versicolorin B desaturase stcL to produce versicolorin A (VERA). The ketoreductase stcU and the cytochrome P450 monooxygenase stcS are involved in the conversion of versicolorin A to demethylsterigmatocystin. The Baeyer-Villiger oxidas stcQ and the reductase stcR might be involved in the biosynthetic step from versicolorin A to demethylsterigmatocystin. The final step in the biosynthesis of sterigmatocystin is the methylation of demethylsterigmatocystin catalyzed by the methyltransferase stcP. The sequence is that of Norsolorinic acid synthase stcA from Emericella nidulans (strain FGSC A4 / ATCC 38163 / CBS 112.46 / NRRL 194 / M139) (Aspergillus nidulans).